Reading from the N-terminus, the 65-residue chain is Large ribosomal subunit protein bL35 (65 aa).

It belongs to the bacterial ribosomal protein bL35 family.

The sequence is that of Large ribosomal subunit protein bL35 from Agathobacter rectalis (strain ATCC 33656 / DSM 3377 / JCM 17463 / KCTC 5835 / VPI 0990) (Eubacterium rectale).